We begin with the raw amino-acid sequence, 116 residues long: Ly-6/neurotoxin-like protein 1 (116 aa).

The signal sequence occupies residues 1-20; it reads MTHLLTVFLVALMGLPVAQA. Residues 21–104 enclose the UPAR/Ly6 domain; the sequence is LECHVCAYNG…GFATPVTLAL (84 aa). Disulfide bonds link cysteine 23-cysteine 46, cysteine 26-cysteine 33, cysteine 39-cysteine 64, cysteine 68-cysteine 85, and cysteine 86-cysteine 91. Asparagine 92 carries the GPI-anchor amidated asparagine lipid modification. The propeptide at 93 to 116 is removed in mature form; sequence GAGFATPVTLALVPALLATFWSLL.

As to quaternary structure, interacts with nAChRs containing alpha-4:beta-2 (CHRNA4:CHRNB2) and alpha-7 (CHRNA7) subunits. Interacts with CHRNA4 probably in the endoplasmic reticulum prior to nAChR pentameric assembly. Interacts with KCNA2/Potassium voltage-gated channel subfamily A member 2. As to expression, expressed in neurons of multiple regions in the CNS, including the cerebral cortex, thalamus, substantia nigra, cerebellum, amygdala and hippocampus. Also expressed in kidney, heart and thymus, but at lower levels than in the brain. Expressed in the primary visual cortex (V1) and the lateral geniculate nucleus (at protein level).

It localises to the cell membrane. It is found in the cell projection. The protein localises to the dendrite. The protein resides in the endoplasmic reticulum. Its function is as follows. Acts in different tissues through interaction to nicotinic acetylcholine receptors (nAChRs). The proposed role as modulator of nAChR activity seems to be dependent on the nAChR subtype and stoichiometry, and to involve an effect on nAChR trafficking and its cell surface expression, and on single channel properties of the nAChR inserted in the plasma membrane. Modulates functional properties of nicotinic acetylcholine receptors (nAChRs) to prevent excessive excitation, and hence neurodegeneration. Enhances desensitization by increasing both the rate and extent of desensitization of alpha-4:beta-2-containing nAChRs and slowing recovery from desensitization. Promotes large amplitude ACh-evoked currents through alpha-4:beta-2 nAChRs. Is involved in regulation of the nAChR pentameric assembly in the endoplasmic reticulum. Shifts stoichiometry from high sensitivity alpha-4(2):beta-2(3) to low sensitivity alpha-4(3):beta-2(2) nAChR. In vitro modulates alpha-3:beta-4-containing nAChRs. Reduces cell surface expression of (alpha-3:beta-4)(2):beta-4 and (alpha-3:beta-4)(2):alpha-5 nAChRs suggesting an interaction with nAChR alpha-3(-):(+)beta-4 subunit interfaces and an allosteric mode. Corresponding single channel effects characterized by decreased unitary conductance, altered burst proportions and enhanced desensitization/inactivation seem to depend on nAChR alpha:alpha subunit interfaces and are greater in (alpha-3:beta-2)(2):alpha-3 when compared to (alpha-3:beta-2)(2):alpha-5 nAChRs. Prevents plasticity in the primary visual cortex late in life. In Mus musculus (Mouse), this protein is Ly-6/neurotoxin-like protein 1.